A 453-amino-acid polypeptide reads, in one-letter code: Serine/threonine-protein phosphatase 2A regulatory subunit B'' subunit gamma (453 aa).

2 consecutive EF-hand domains span residues 273 to 308 (PSAL…TMTN) and 341 to 376 (KEPA…IQEL). Asp-286, Asp-288, Asn-290, Met-292, and Glu-297 together coordinate Ca(2+).

In terms of assembly, interacts with MCM3AP/GANP, PPP5C, and the phosphatase 2A core enzyme composed of the PPP2CA catalytic subunit and the constant regulatory subunit PPP2R1A. Finds in a complex with ABCB1, TFPI2 and PPP2R3C; leading to the dephosphorylation of ABCB1. As to expression, expressed in all tissues tested including heart, brain, spleen, thymus, lung, liver, kidney and testis.

Its subcellular location is the nucleus. It localises to the cytoplasm. Functionally, may regulate MCM3AP phosphorylation through phosphatase recruitment. May act as a negative regulator of ABCB1 expression and function through the dephosphorylation of ABCB1 by TFPI2/PPP2R3C complex. May play a role in the activation-induced cell death of B-cells. The protein is Serine/threonine-protein phosphatase 2A regulatory subunit B'' subunit gamma (Ppp2r3c) of Mus musculus (Mouse).